The sequence spans 635 residues: Nuclear distribution protein nudE homolog 1 (635 aa).

Residues 14–192 (EKEIKHWKSK…TILRDLVTRS (179 aa)) adopt a coiled-coil conformation. Disordered regions lie at residues 35-63 (ESSL…NKTI), 200-267 (TMAS…LSRD), 279-328 (VLDD…SARA), 389-504 (SRVV…DHDP), and 516-635 (AAQA…TETF). Over residues 43 to 56 (ESSKELEQEMEKEL) the composition is skewed to basic and acidic residues. Polar residues-rich tracts occupy residues 201–224 (MASS…SPIK) and 237–246 (SRQALSSPVT). The segment covering 280–299 (LDDSPTATTTSAAPTRSSTL) has biased composition (low complexity). Composition is skewed to polar residues over residues 314–326 (ASTS…SPSA) and 411–428 (GSPS…TSTP). A compositionally biased stretch (low complexity) spans 516-541 (AAQASVAKRRTSMSGSGMSHSASHGS). 2 stretches are compositionally biased toward polar residues: residues 547–571 (SGST…SSMT) and 580–619 (SKRT…PAQT). Low complexity predominate over residues 620-635 (LSRSRSSSLGSETETF).

This sequence belongs to the nudE family. Self-associates. Interacts with PAC1.

It is found in the cytoplasm. It localises to the cytoskeleton. Functionally, required for nuclear migration. The polypeptide is Nuclear distribution protein nudE homolog 1 (NDE1) (Mycosarcoma maydis (Corn smut fungus)).